The chain runs to 284 residues: Extracellular metalloprotease VDBG_01143 (284 aa).

The signal sequence occupies residues 1 to 18 (MLFKSLFVAAATAVGVSG). The N-linked (GlcNAc...) asparagine glycan is linked to Asn-58. Residue His-200 coordinates Zn(2+). The active site involves Glu-201. His-204 contacts Zn(2+). Cys-236 and Cys-263 are joined by a disulfide.

This sequence belongs to the peptidase M43B family.

The protein resides in the secreted. Secreted metalloproteinase that allows assimilation of proteinaceous substrates. The protein is Extracellular metalloprotease VDBG_01143 of Verticillium alfalfae (strain VaMs.102 / ATCC MYA-4576 / FGSC 10136) (Verticillium wilt of alfalfa).